Reading from the N-terminus, the 767-residue chain is MSAEPSVQTTSSSGPTELRSAPSYAGSWTKLTPPLTPWVVSLLSDLGFGQMTPVQASTIPLFVSHKDVVVEAVTGSGKTLAFVIPVLEMLARRTTRLKKDEVGALIVSPTRELAEQIYKVLVMFLDAQNHAHVQAQQQQDQDEQDEQDEQEAQSDSDTDPDASTALNNKRKSSNHLVARKNMISGAQLVVGGSKCTPLDDYRQLRDSGADILVGTPGRLEELLSKKGVKKSSLEVLVLDEADRLLDLGFTENLRRILSLLPKQRRTGLFSATMTDALSELVRIGLRNPVRVVVKVEAKHKTSSSIDDSRRTPATLQNLYQLCRAQNKLAQLARIVLFESSQNAISGGARKLIVYFSTCAQVNYFYSVFSQVSILRQHRVKLYALHGKQTPSKRKSMFDTFVASTALDSGASGASVLFCTDVAARGLDLPDVDVVVQYDPPTDPKVFSHRCGRTARAGRNGRAIVMLHTGREQDFVSYMRVKRIPLSPYPYLSSTLHGILEPAEDDASAHDLELSIRDLAKTDREIFELSIRAYVSYVRAYTKHEMSYIFRINELDLAGVARAFALIRLPSMPELKSRQSAGTLIYNQEPIDFSSIPFKDKAKQRIRLAKLSGDQAKPPARIKASVDDAAQLQDDQCDSHDSDDAHPNSSATRAKNKRKLEREKGAWSAQKERKQARLANREKRARKRTFLKTQAAESSSNAKHEPPQDDHDEHDWNDDYRKLQKDKRQQRQRNKADRANSDNDDAMHFNSDSDAAAANADAEPFFVI.

Positions 28 to 56 (WTKLTPPLTPWVVSLLSDLGFGQMTPVQA) match the Q motif motif. Residues 59–291 (IPLFVSHKDV…RIGLRNPVRV (233 aa)) enclose the Helicase ATP-binding domain. ATP is bound at residue 72–79 (AVTGSGKT). Residues 132-176 (HVQAQQQQDQDEQDEQDEQEAQSDSDTDPDASTALNNKRKSSNHL) are disordered. Residues 140–160 (DQDEQDEQDEQEAQSDSDTDP) are compositionally biased toward acidic residues. The DEAD box signature appears at 239–242 (DEAD). Residues 330–507 (QLARIVLFES…ILEPAEDDAS (178 aa)) enclose the Helicase C-terminal domain. The disordered stretch occupies residues 609-767 (KLSGDQAKPP…NADAEPFFVI (159 aa)). Basic and acidic residues-rich tracts occupy residues 636–645 (CDSHDSDDAH) and 659–681 (LEREKGAWSAQKERKQARLANRE). The stretch at 654–746 (KNKRKLEREK…RANSDNDDAM (93 aa)) forms a coiled coil. Over residues 690 to 700 (LKTQAAESSSN) the composition is skewed to polar residues. Positions 701 to 746 (AKHEPPQDDHDEHDWNDDYRKLQKDKRQQRQRNKADRANSDNDDAM) are enriched in basic and acidic residues. Low complexity predominate over residues 749–761 (NSDSDAAAANADA).

This sequence belongs to the DEAD box helicase family. DDX55/SPB4 subfamily. As to quaternary structure, component of pre-60S ribosomal complexes.

The protein localises to the nucleus. It is found in the nucleolus. The catalysed reaction is ATP + H2O = ADP + phosphate + H(+). Its function is as follows. ATP-binding RNA helicase involved in the biogenesis of 60S ribosomal subunits. Binds 90S pre-ribosomal particles and dissociates from pre-60S ribosomal particles after processing of 27SB pre-rRNA. Required for the normal formation of 18S rRNA through the processing of pre-rRNAs at sites A0, A1 and A2, and the normal formation of 25S and 5.8S rRNAs through the processing of pre-rRNAs at sites C1 and C2. The protein is ATP-dependent rRNA helicase SPB4 of Mycosarcoma maydis (Corn smut fungus).